Here is a 243-residue protein sequence, read N- to C-terminus: MGHKIHPSGLRLGITQEHRSKWFATSKTYPILLQEDFKIRTFIQKKYGAAGISDVLIARKADQLELELKTARPGVIVGRQGSGIEELRAGIQKTIGDNTRQVRINVVEVERVDADAFLLAEYISQQLEKRVAFRRTIRMALQRAQRAGVLGLKIQVGGRLNGAEIARTEWTREGRVPLHTLRAEIDYATREANTTYGVLGIKVWVFKGEVLPKEEKTIPVGASPKRKAGRRPQQFEDRSNENS.

The KH type-2 domain occupies 39 to 110; the sequence is IRTFIQKKYG…QVRINVVEVE (72 aa). The segment at 216–243 is disordered; the sequence is KTIPVGASPKRKAGRRPQQFEDRSNENS. The segment covering 233–243 has biased composition (basic and acidic residues); the sequence is QQFEDRSNENS.

This sequence belongs to the universal ribosomal protein uS3 family. As to quaternary structure, part of the 30S ribosomal subunit. Forms a tight complex with proteins S10 and S14.

In terms of biological role, binds the lower part of the 30S subunit head. Binds mRNA in the 70S ribosome, positioning it for translation. This Prochlorococcus marinus (strain MIT 9312) protein is Small ribosomal subunit protein uS3.